The chain runs to 562 residues: Protein wntless (562 aa).

The Cytoplasmic portion of the chain corresponds to 1-13 (MSGTILENLSGRK). The helical transmembrane segment at 14–34 (LSILVSSLMLCQVACFLMGGL) threads the bilayer. Over 35–239 (YAPVPAGHQT…AIHQNGGFTQ (205 aa)) the chain is Lumenal. 2 N-linked (GlcNAc...) asparagine glycosylation sites follow: N58 and N103. Residues 240–260 (VWLLLKTLLFPFVVGIMIWFW) traverse the membrane as a helical segment. Over 261–270 (RRVHILQRSP) the chain is Cytoplasmic. Residues 271–291 (ALLEYMLLYLGGALSFLNLPL) form a helical membrane-spanning segment. Topologically, residues 292–311 (EYLTLSIEMPYMLLLSDVRQ) are lumenal. Residues 312–332 (GIFYAMLLSFWLVFAGEHMLI) form a helical membrane-spanning segment. Topologically, residues 333–344 (QDTPNKSTIRSR) are cytoplasmic. Residues 345 to 365 (YWKHLSAVVVGCISLFVFDIC) traverse the membrane as a helical segment. Residues 366-390 (ERGVQLRNPFYSIWTTPLGAKVAMS) are Lumenal-facing. The helical transmembrane segment at 391–411 (FIVLAGVSAAIYFLFLCFMVW) threads the bilayer. At 412-441 (KVFKDIGDKRTSLPSMSQARRLHYEGLIYR) the chain is on the cytoplasmic side. The chain crosses the membrane as a helical span at residues 442–462 (FKFLMLATLLCAGLTVAGFIM). Topologically, residues 463–482 (GQMAEGHWKWNEDIEIQLTS) are lumenal. A helical membrane pass occupies residues 483-503 (AFLTGVYGMWNIYIFALIILY). Over 504 to 562 (APSHKQWPTMRHSDETTQSNENIVASAASEEIEFSNLPSDSNPSEISSLTSFTRKVAFD) the chain is Cytoplasmic.

The protein belongs to the wntless family. Interacts with wg; in the Golgi. Interacts with Vps35, a component of the retromer complex; wls stability is regulated by Vps35.

The protein localises to the presynaptic cell membrane. It is found in the postsynaptic cell membrane. Its subcellular location is the cell membrane. It localises to the endoplasmic reticulum membrane. The protein resides in the endosome membrane. The protein localises to the golgi apparatus membrane. A segment polarity gene required for wingless (wg)-dependent patterning processes, acting in both wg-sending cells and wg-target cells. In non-neuronal cells wls directs wg secretion. The wls traffic loop encompasses the Golgi, the cell surface, an endocytic compartment and a retrograde route leading back to the Golgi, and involves clathrin-mediated endocytosis and the retromer complex (a conserved protein complex consisting of Vps35 and Vps26). In neuronal cells (the larval motorneuron NMJ), the wg signal moves across the synapse via the release of wls-containing exosome-like vesicles. Postsynaptic wls is required for the trafficking of fz2 through the fz2-interacting protein Grip. This is Protein wntless from Drosophila virilis (Fruit fly).